The following is a 311-amino-acid chain: Aspartate carbamoyltransferase catalytic subunit (311 aa).

Carbamoyl phosphate-binding residues include Arg-55 and Thr-56. An L-aspartate-binding site is contributed by Lys-85. Carbamoyl phosphate-binding residues include Arg-106, His-135, and Gln-138. Positions 168 and 230 each coordinate L-aspartate. Positions 268 and 269 each coordinate carbamoyl phosphate.

It belongs to the aspartate/ornithine carbamoyltransferase superfamily. ATCase family. As to quaternary structure, heterododecamer (2C3:3R2) of six catalytic PyrB chains organized as two trimers (C3), and six regulatory PyrI chains organized as three dimers (R2).

The catalysed reaction is carbamoyl phosphate + L-aspartate = N-carbamoyl-L-aspartate + phosphate + H(+). Its pathway is pyrimidine metabolism; UMP biosynthesis via de novo pathway; (S)-dihydroorotate from bicarbonate: step 2/3. Functionally, catalyzes the condensation of carbamoyl phosphate and aspartate to form carbamoyl aspartate and inorganic phosphate, the committed step in the de novo pyrimidine nucleotide biosynthesis pathway. This is Aspartate carbamoyltransferase catalytic subunit from Klebsiella pneumoniae subsp. pneumoniae (strain ATCC 700721 / MGH 78578).